The primary structure comprises 1001 residues: Serine/threonine-protein kinase TAO1 (1001 aa).

Ser9 carries the phosphoserine modification. Residues 28–281 (FTDLREIGHG…SEELLKHIFV (254 aa)) form the Protein kinase domain. ATP is bound by residues 34 to 42 (IGHGSFGAV) and Lys57. The Proton acceptor role is filled by Asp151. The segment at 324-433 (PAVEAQEEEE…QVSRHKSHYR (110 aa)) is disordered. Positions 350–373 (SNQSIPSMSISASSQSSSVNSLPD) are enriched in low complexity. Composition is skewed to basic and acidic residues over residues 375–388 (SDDK…EGDH) and 399–416 (LKPE…RTRA). A phosphoserine mark is found at Ser421 and Ser445. The stretch at 458–651 (SELREQMSGY…QTQKDLEHAM (194 aa)) forms a coiled coil. The disordered stretch occupies residues 567–587 (KEELNENQSTPKKEKQEWLSK). The segment covering 577–587 (PKKEKQEWLSK) has biased composition (basic and acidic residues). A Phosphothreonine modification is found at Thr669. Residues 754 to 877 (KAVLKRLKEE…LERQAREIEA (124 aa)) adopt a coiled-coil conformation. The interval 911–1001 (SHNPTGGPGP…ISNGSHMSYT (91 aa)) is disordered. At Ser965 the chain carries Phosphoserine. Polar residues predominate over residues 975–1001 (GGRTEQGMSRSTSVTSQISNGSHMSYT).

This sequence belongs to the protein kinase superfamily. STE Ser/Thr protein kinase family. STE20 subfamily. In terms of assembly, self-associates. Interacts with MAP2K3. Interacts with SPRED1. Interacts with TESK1; the interaction inhibits TAOK1 kinase activity. Interacts with MAP3K7. Proteolytically processed by caspase-3 (CASP3). In terms of processing, autophosphorylated. Phosphorylated by ATM in response to DNA damage. Phosphorylated by LRRK2. In terms of tissue distribution, highly expressed in the testis, and to a lower extent also expressed in brain, placenta, colon and skeletal muscle.

It is found in the cytoplasm. The catalysed reaction is L-seryl-[protein] + ATP = O-phospho-L-seryl-[protein] + ADP + H(+). It carries out the reaction L-threonyl-[protein] + ATP = O-phospho-L-threonyl-[protein] + ADP + H(+). Serine/threonine-protein kinase activity is inhibited by SPRED1. In terms of biological role, serine/threonine-protein kinase involved in various processes such as p38/MAPK14 stress-activated MAPK cascade, DNA damage response and regulation of cytoskeleton stability. Phosphorylates MAP2K3, MAP2K6 and MARK2. Acts as an activator of the p38/MAPK14 stress-activated MAPK cascade by mediating phosphorylation and subsequent activation of the upstream MAP2K3 and MAP2K6 kinases. Involved in G-protein coupled receptor signaling to p38/MAPK14. In response to DNA damage, involved in the G2/M transition DNA damage checkpoint by activating the p38/MAPK14 stress-activated MAPK cascade, probably by mediating phosphorylation of MAP2K3 and MAP2K6. Acts as a regulator of cytoskeleton stability by phosphorylating 'Thr-208' of MARK2, leading to activate MARK2 kinase activity and subsequent phosphorylation and detachment of MAPT/TAU from microtubules. Also acts as a regulator of apoptosis: regulates apoptotic morphological changes, including cell contraction, membrane blebbing and apoptotic bodies formation via activation of the MAPK8/JNK cascade. Plays an essential role in the regulation of neuronal development in the central nervous system. Also plays a role in the regulation of neuronal migration to the cortical plate. The chain is Serine/threonine-protein kinase TAO1 (TAOK1) from Homo sapiens (Human).